Consider the following 240-residue polypeptide: RNA-free ribonuclease P (240 aa).

This sequence belongs to the HARP family.

The catalysed reaction is Endonucleolytic cleavage of RNA, removing 5'-extranucleotides from tRNA precursor.. RNA-free RNase P that catalyzes the removal of the 5'-leader sequence from pre-tRNA to produce the mature 5'-terminus. This is RNA-free ribonuclease P from Methanococcus aeolicus (strain ATCC BAA-1280 / DSM 17508 / OCM 812 / Nankai-3).